Reading from the N-terminus, the 389-residue chain is Glutamate 5-kinase (389 aa).

Lys16 contributes to the ATP binding site. Ser56, Asp143, and Asn155 together coordinate substrate. 175 to 176 is an ATP binding site; the sequence is SD. The PUA domain occupies 281–358; the sequence is AGGLHVDDGA…AEIEAILGYP (78 aa).

Belongs to the glutamate 5-kinase family.

Its subcellular location is the cytoplasm. It catalyses the reaction L-glutamate + ATP = L-glutamyl 5-phosphate + ADP. Its pathway is amino-acid biosynthesis; L-proline biosynthesis; L-glutamate 5-semialdehyde from L-glutamate: step 1/2. Catalyzes the transfer of a phosphate group to glutamate to form L-glutamate 5-phosphate. The sequence is that of Glutamate 5-kinase from Rhizobium leguminosarum bv. trifolii (strain WSM2304).